A 353-amino-acid polypeptide reads, in one-letter code: UDP-3-O-acylglucosamine N-acyltransferase (353 aa).

His-242 (proton acceptor) is an active-site residue.

This sequence belongs to the transferase hexapeptide repeat family. LpxD subfamily. As to quaternary structure, homotrimer.

The catalysed reaction is a UDP-3-O-[(3R)-3-hydroxyacyl]-alpha-D-glucosamine + a (3R)-hydroxyacyl-[ACP] = a UDP-2-N,3-O-bis[(3R)-3-hydroxyacyl]-alpha-D-glucosamine + holo-[ACP] + H(+). It functions in the pathway bacterial outer membrane biogenesis; LPS lipid A biosynthesis. Functionally, catalyzes the N-acylation of UDP-3-O-acylglucosamine using 3-hydroxyacyl-ACP as the acyl donor. Is involved in the biosynthesis of lipid A, a phosphorylated glycolipid that anchors the lipopolysaccharide to the outer membrane of the cell. The sequence is that of UDP-3-O-acylglucosamine N-acyltransferase from Pseudomonas paraeruginosa (strain DSM 24068 / PA7) (Pseudomonas aeruginosa (strain PA7)).